A 906-amino-acid polypeptide reads, in one-letter code: Ribonucleoside-diphosphate reductase large subunit-like protein (906 aa).

2 disordered regions span residues 1–70 (MNPA…AGNT) and 89–129 (VSWR…LSTF). Over residues 98–109 (PDGTPSVLSLTR) the composition is skewed to polar residues.

This sequence belongs to the ribonucleoside diphosphate reductase large chain family.

The protein localises to the virion. The protein resides in the host cytoplasm. In terms of biological role, does not possess a ribonucleotide reductase activity. Betaherpesviruses probably use another strategy to expand the dNTP pool in a quiescent host cell. The polypeptide is Ribonucleoside-diphosphate reductase large subunit-like protein (Human cytomegalovirus (strain AD169) (HHV-5)).